We begin with the raw amino-acid sequence, 583 residues long: Eukaryotic translation initiation factor 3 subunit D (583 aa).

The tract at residues 116 to 150 (GRAQRGAGQRGGRAGFQRVGAGRGQGDRFYDNRGG) is disordered. Residues 140-149 (QGDRFYDNRG) show a composition bias toward basic and acidic residues. The RNA gate stretch occupies residues 298 to 312 (SLDLVTVNENAIDAP). The segment at 561-583 (NTFEEDEEAAAEEEEQKAEEDEE) is disordered. Positions 563-583 (FEEDEEAAAEEEEQKAEEDEE) are enriched in acidic residues.

This sequence belongs to the eIF-3 subunit D family. Component of the eukaryotic translation initiation factor 3 (eIF-3) complex.

It localises to the cytoplasm. Its function is as follows. mRNA cap-binding component of the eukaryotic translation initiation factor 3 (eIF-3) complex, which is involved in protein synthesis of a specialized repertoire of mRNAs and, together with other initiation factors, stimulates binding of mRNA and methionyl-tRNAi to the 40S ribosome. The eIF-3 complex specifically targets and initiates translation of a subset of mRNAs involved in cell proliferation. In the eIF-3 complex, eif3d specifically recognizes and binds the 7-methylguanosine cap of a subset of mRNAs. This is Eukaryotic translation initiation factor 3 subunit D from Aspergillus oryzae (strain ATCC 42149 / RIB 40) (Yellow koji mold).